The sequence spans 398 residues: Tyrosine--tRNA ligase (398 aa).

The short motif at 42-51 (PTAPDLHLGH) is the 'HIGH' region element. Positions 226-230 (KMSKS) match the 'KMSKS' region motif. Position 229 (K229) interacts with ATP. Residues 341–397 (AFLEAAGLVKSRGEAKRLIKEGALSVDGVRCDDANSPLASGEYVIKLGKKRFLRLTV) enclose the S4 RNA-binding domain.

This sequence belongs to the class-I aminoacyl-tRNA synthetase family. TyrS type 2 subfamily. Homodimer.

The protein localises to the cytoplasm. It catalyses the reaction tRNA(Tyr) + L-tyrosine + ATP = L-tyrosyl-tRNA(Tyr) + AMP + diphosphate + H(+). Catalyzes the attachment of tyrosine to tRNA(Tyr) in a two-step reaction: tyrosine is first activated by ATP to form Tyr-AMP and then transferred to the acceptor end of tRNA(Tyr). The protein is Tyrosine--tRNA ligase of Nitratidesulfovibrio vulgaris (strain ATCC 29579 / DSM 644 / CCUG 34227 / NCIMB 8303 / VKM B-1760 / Hildenborough) (Desulfovibrio vulgaris).